A 221-amino-acid polypeptide reads, in one-letter code: uncharacterized protein (221 aa).

The next 4 membrane-spanning stretches (helical) occupy residues 30-50 (FGIF…LPLA), 62-82 (AGVV…LYWI), 144-164 (VWVF…VYVY), and 179-199 (ILDQ…LLYL).

It belongs to the DedA family.

The protein resides in the cell membrane. This is an uncharacterized protein from Bacillus subtilis (strain 168).